The sequence spans 282 residues: uncharacterized protein (282 aa).

Catalysis depends on Y50, which acts as the Proton donor. Position 115 (H115) interacts with substrate.

The protein belongs to the aldo/keto reductase family.

This is an uncharacterized protein from Saccharomyces cerevisiae (strain ATCC 204508 / S288c) (Baker's yeast).